Consider the following 272-residue polypeptide: Ribosomal RNA small subunit methyltransferase A (272 aa).

Residues histidine 11, leucine 13, glycine 38, glutamate 59, aspartate 84, and asparagine 109 each contribute to the S-adenosyl-L-methionine site.

It belongs to the class I-like SAM-binding methyltransferase superfamily. rRNA adenine N(6)-methyltransferase family. RsmA subfamily.

Its subcellular location is the cytoplasm. It carries out the reaction adenosine(1518)/adenosine(1519) in 16S rRNA + 4 S-adenosyl-L-methionine = N(6)-dimethyladenosine(1518)/N(6)-dimethyladenosine(1519) in 16S rRNA + 4 S-adenosyl-L-homocysteine + 4 H(+). Functionally, specifically dimethylates two adjacent adenosines (A1518 and A1519) in the loop of a conserved hairpin near the 3'-end of 16S rRNA in the 30S particle. May play a critical role in biogenesis of 30S subunits. The protein is Ribosomal RNA small subunit methyltransferase A of Rippkaea orientalis (strain PCC 8801 / RF-1) (Cyanothece sp. (strain PCC 8801)).